Here is a 243-residue protein sequence, read N- to C-terminus: Probable phosphatase CLI_3563 (243 aa).

9 residues coordinate Zn(2+): His8, His10, His16, His41, Glu74, His102, His132, Asp192, and His194.

The protein belongs to the PHP family. Requires Zn(2+) as cofactor.

The polypeptide is Probable phosphatase CLI_3563 (Clostridium botulinum (strain Langeland / NCTC 10281 / Type F)).